Consider the following 22-residue polypeptide: Brevinin-1OKa (22 aa).

The residue at position 22 (K22) is a Lysine amide.

In terms of tissue distribution, expressed by the skin glands.

Its subcellular location is the secreted. Its function is as follows. Antimicrobial peptide. Active against Gram-negative bacterium E.coli (MIC=12.5 uM) and against Gram-positive bacterium S.aureus (MIC=12.5 uM). This Nidirana okinavana (Kampira Falls frog) protein is Brevinin-1OKa.